The chain runs to 114 residues: MNVYLLLASGILCALMTVFWKYRRFQRNTGEMSSNSTALALVRPSSTGLINSNTDNNLSVYDLSRDILNNFPHSIAMQKRILVNLTTVENKLVELEHILVSKGFRSASAHRKST.

Topologically, residues 1 to 4 are cytoplasmic; the sequence is MNVY. A helical; Signal-anchor for type II membrane protein membrane pass occupies residues 5-22; the sequence is LLLASGILCALMTVFWKY. The Extracellular portion of the chain corresponds to 23–114; that stretch reads RRFQRNTGEM…RSASAHRKST (92 aa). A glycan (N-linked (GlcNAc...) asparagine) is linked at Asn-84.

The protein localises to the cell membrane. This Macaca fascicularis (Crab-eating macaque) protein is Kita-kyushu lung cancer antigen 1 homolog (CT83).